A 248-amino-acid chain; its full sequence is NAD(P)H-quinone oxidoreductase subunit K (248 aa).

4 residues coordinate [4Fe-4S] cluster: cysteine 66, cysteine 67, cysteine 131, and cysteine 162.

It belongs to the complex I 20 kDa subunit family. As to quaternary structure, NDH-1 can be composed of about 15 different subunits; different subcomplexes with different compositions have been identified which probably have different functions. [4Fe-4S] cluster serves as cofactor.

The protein resides in the cellular thylakoid membrane. It catalyses the reaction a plastoquinone + NADH + (n+1) H(+)(in) = a plastoquinol + NAD(+) + n H(+)(out). The catalysed reaction is a plastoquinone + NADPH + (n+1) H(+)(in) = a plastoquinol + NADP(+) + n H(+)(out). NDH-1 shuttles electrons from an unknown electron donor, via FMN and iron-sulfur (Fe-S) centers, to quinones in the respiratory and/or the photosynthetic chain. The immediate electron acceptor for the enzyme in this species is believed to be plastoquinone. Couples the redox reaction to proton translocation, and thus conserves the redox energy in a proton gradient. Cyanobacterial NDH-1 also plays a role in inorganic carbon-concentration. The polypeptide is NAD(P)H-quinone oxidoreductase subunit K (Synechococcus sp. (strain WH7803)).